A 68-amino-acid polypeptide reads, in one-letter code: Large ribosomal subunit protein uL29 (68 aa).

This sequence belongs to the universal ribosomal protein uL29 family.

In Rhodospirillum rubrum (strain ATCC 11170 / ATH 1.1.1 / DSM 467 / LMG 4362 / NCIMB 8255 / S1), this protein is Large ribosomal subunit protein uL29.